The chain runs to 196 residues: Imidazole glycerol phosphate synthase subunit HisH (196 aa).

The region spanning 2–196 (NVVIVDTECA…LKRFLELTLC (195 aa)) is the Glutamine amidotransferase type-1 domain. Cys77 functions as the Nucleophile in the catalytic mechanism. Residues His175 and Glu177 contribute to the active site.

Heterodimer of HisH and HisF.

Its subcellular location is the cytoplasm. It carries out the reaction 5-[(5-phospho-1-deoxy-D-ribulos-1-ylimino)methylamino]-1-(5-phospho-beta-D-ribosyl)imidazole-4-carboxamide + L-glutamine = D-erythro-1-(imidazol-4-yl)glycerol 3-phosphate + 5-amino-1-(5-phospho-beta-D-ribosyl)imidazole-4-carboxamide + L-glutamate + H(+). The enzyme catalyses L-glutamine + H2O = L-glutamate + NH4(+). The protein operates within amino-acid biosynthesis; L-histidine biosynthesis; L-histidine from 5-phospho-alpha-D-ribose 1-diphosphate: step 5/9. In terms of biological role, IGPS catalyzes the conversion of PRFAR and glutamine to IGP, AICAR and glutamate. The HisH subunit catalyzes the hydrolysis of glutamine to glutamate and ammonia as part of the synthesis of IGP and AICAR. The resulting ammonia molecule is channeled to the active site of HisF. This Idiomarina loihiensis (strain ATCC BAA-735 / DSM 15497 / L2-TR) protein is Imidazole glycerol phosphate synthase subunit HisH.